Reading from the N-terminus, the 513-residue chain is MAVAAPGQLNLDESPSWGSRSVDCFEKLEQIGEGTYGQVYMAKETETNEIVALKKIRMDNEREGFPITAIREIKILKKLHHQNVIQLKEIVTSPGPERDEQGKPIEGNKYKGSIYMVFEYMDHDLTGLADRPGMRFTVPQIKCYMRQLLTGLHYCHVNQVLHRDIKGSNLLIDNEGNLKLADFGLARSFSSDHNGNLTNRVITLWYRPPELLLGSTRYGPAVDMWSVGCIFAELLNGKPILTGKNEPEQLSKIFELCGTPDELIWPGVTKMPWYNNFKPQRPMKRRVKESFKHFDQHALDLLEKMLTLDPSQRISAKDALDAEYFWTDPLPCDPKSLPKYEASHEFQTKKKRQQQRQAEEAAKRQKLQHPPPHSRLPPIQNPGQPHQIRPGQPMHNAPPVAAGPSHHYAKPRGPGGPNRYPQGGNQGGYNPNRGGQGGGYGSGPYPQQGRGPPPYPGGGMGGAGGPRGGGGSGYGVGGPNYQQGGPYGASGPGRGPNYNQGGSRNQQQYGNWQ.

The Protein kinase domain occupies 25 to 325 (FEKLEQIGEG…AKDALDAEYF (301 aa)). Residues 31–39 (IGEGTYGQV) and Lys-54 each bind ATP. Thr-35 carries the phosphothreonine modification. Tyr-36 carries the phosphotyrosine modification. The Proton acceptor role is filled by Asp-164. The residue at position 191 (Ser-191) is a Phosphoserine. A Phosphothreonine modification is found at Thr-198. Basic and acidic residues predominate over residues 336-348 (SLPKYEASHEFQT). Positions 336–513 (SLPKYEASHE…RNQQQYGNWQ (178 aa)) are disordered. The segment covering 417–433 (PNRYPQGGNQGGYNPNR) has biased composition (low complexity). Gly residues-rich tracts occupy residues 457–478 (GGGM…GVGG) and 485–494 (GPYGASGPGR). Residues 497-513 (NYNQGGSRNQQQYGNWQ) show a composition bias toward polar residues.

The protein belongs to the protein kinase superfamily. CMGC Ser/Thr protein kinase family. CDC2/CDKX subfamily.

The enzyme catalyses L-seryl-[protein] + ATP = O-phospho-L-seryl-[protein] + ADP + H(+). The catalysed reaction is L-threonyl-[protein] + ATP = O-phospho-L-threonyl-[protein] + ADP + H(+). It catalyses the reaction [DNA-directed RNA polymerase] + ATP = phospho-[DNA-directed RNA polymerase] + ADP + H(+). The protein is Cyclin-dependent kinase C-2 (CDKC-2) of Oryza sativa subsp. japonica (Rice).